The following is a 178-amino-acid chain: UPF0114 protein in repA1-repA2 intergenic region (178 aa).

The next 3 helical transmembrane spans lie at 14–34, 53–73, and 136–156; these read WLIFPIYLGLSFCLILLTLKF, LILVILSLIDIVLVGGLLVMV, and WYVIIHLTFVVSAGGMAYIDR.

The protein belongs to the UPF0114 family.

The protein resides in the cell membrane. The sequence is that of UPF0114 protein in repA1-repA2 intergenic region from Buchnera aphidicola subsp. Tetraneura caerulescens.